Reading from the N-terminus, the 454-residue chain is tRNA modification GTPase MnmE (454 aa).

The (6S)-5-formyl-5,6,7,8-tetrahydrofolate site is built by Arg23, Glu80, and Lys120. The TrmE-type G domain occupies 216-377; sequence GMKVVIAGRP…LRNHLKQSMG (162 aa). Asn226 contributes to the K(+) binding site. GTP-binding positions include 226 to 231, 245 to 251, 270 to 273, 335 to 338, and 358 to 360; these read NAGKSS, TDIAGTT, DTAG, NKAD, and SAR. Ser230 provides a ligand contact to Mg(2+). Thr245, Ile247, and Thr250 together coordinate K(+). Residue Thr251 coordinates Mg(2+). Position 454 (Lys454) interacts with (6S)-5-formyl-5,6,7,8-tetrahydrofolate.

This sequence belongs to the TRAFAC class TrmE-Era-EngA-EngB-Septin-like GTPase superfamily. TrmE GTPase family. In terms of assembly, homodimer. Heterotetramer of two MnmE and two MnmG subunits. The cofactor is K(+).

Its subcellular location is the cytoplasm. In terms of biological role, exhibits a very high intrinsic GTPase hydrolysis rate. Involved in the addition of a carboxymethylaminomethyl (cmnm) group at the wobble position (U34) of certain tRNAs, forming tRNA-cmnm(5)s(2)U34. The protein is tRNA modification GTPase MnmE of Shigella flexneri serotype 5b (strain 8401).